An 853-amino-acid polypeptide reads, in one-letter code: Trimethylguanosine synthase (853 aa).

Residues 53 to 80 (NNSGDQATEEEEGGYSCGTAESHDSKGI) are disordered. At Ser55 the chain carries Phosphoserine. Thr60 bears the Phosphothreonine mark. Phosphoserine occurs at positions 85, 89, 96, and 141. The residue at position 146 (Tyr146) is a Phosphotyrosine. The tract at residues 149-187 (DDILASDDPSSIEQYENTRTYELQSKKDTETENPPVENT) is disordered. Ser154 carries the phosphoserine modification. Residues 156 to 171 (DPSSIEQYENTRTYEL) are compositionally biased toward polar residues. At Ser189 the chain carries Phosphoserine. Disordered regions lie at residues 334 to 461 (SQLD…GGIP) and 527 to 632 (DEEA…KKVN). Positions 367–382 (NGGTNEESNSSGNTNT) are enriched in low complexity. 3 positions are modified to phosphoserine: Ser412, Ser438, and Ser578. Positions 431–442 (DIDENPASDFDD) are enriched in acidic residues. Residues 564-578 (ETNNPEPEKCQSVSS) are compositionally biased toward polar residues. Residues 608 to 619 (PDSRQAETEAEV) show a composition bias toward basic and acidic residues. The span at 620–630 (KKKKNKKKNKK) shows a compositional bias: basic residues. The segment at 631 to 846 (VNGLPPEIAA…TITAYFGDLI (216 aa)) is sufficient for catalytic activity. Asp719 provides a ligand contact to S-adenosyl-L-methionine. Trp766 is a N(7)-methylguanosine binding site.

The protein belongs to the methyltransferase superfamily. Trimethylguanosine synthase family. In terms of assembly, may form homooligomers. Interacts with CREBBP/CBP, EED/WAIT1, EP300/P300, NCOA6/PRIP, PPARBP/PBP and SMN. Ubiquitously expressed. High expression in heart, skeletal muscle, kidney, liver and placenta.

The protein localises to the cytoplasm. The protein resides in the nucleus. It is found in the cajal body. It localises to the nucleolus. It catalyses the reaction a 5'-end (N(7)-methyl 5'-triphosphoguanosine)-ribonucleoside in snRNA + S-adenosyl-L-methionine = a 5'-end (N(2),N(7)-dimethyl 5'-triphosphoguanosine)-ribonucleoside in snRNA + S-adenosyl-L-homocysteine + H(+). The enzyme catalyses a 5'-end (N(7)-methyl 5'-triphosphoguanosine)-ribonucleoside in snoRNA + S-adenosyl-L-methionine = a 5'-end (N(2),N(7)-dimethyl 5'-triphosphoguanosine)-ribonucleoside in snoRNA + S-adenosyl-L-homocysteine + H(+). The catalysed reaction is a 5'-end (N(2),N(7)-dimethyl 5'-triphosphoguanosine)-ribonucleoside in snRNA + S-adenosyl-L-methionine = a 5'-end (N(2),N(2),N(7)-trimethyl 5'-triphosphoguanosine)-ribonucleoside in snRNA + S-adenosyl-L-homocysteine + H(+). It carries out the reaction a 5'-end (N(2),N(7)-dimethyl 5'-triphosphoguanosine)-ribonucleoside in snoRNA + S-adenosyl-L-methionine = a 5'-end (N(2),N(2),N(7)-trimethyl 5'-triphosphoguanosine)-ribonucleoside in snoRNA + S-adenosyl-L-homocysteine + H(+). Catalyzes the 2 serial methylation steps for the conversion of the 7-monomethylguanosine (m(7)G) caps of snRNAs and snoRNAs to a 2,2,7-trimethylguanosine (m(2,2,7)G) cap structure. The enzyme is specific for guanine, and N7 methylation must precede N2 methylation. Hypermethylation of the m7G cap of U snRNAs leads to their concentration in nuclear foci, their colocalization with coilin and the formation of canonical Cajal bodies (CBs). Plays a role in transcriptional regulation. This Homo sapiens (Human) protein is Trimethylguanosine synthase (TGS1).